A 440-amino-acid chain; its full sequence is C4-dicarboxylate transport protein (440 aa).

8 helical membrane passes run 8-28, 40-60, 74-94, 147-167, 187-207, 221-241, 288-308, and 354-374; these read LYLQ…LFPA, FIKL…VTGI, LKGL…GLVV, GDIL…AALK, IVGF…AFTV, LIAC…GLVL, VVGL…SIYL, and AATL…LLGV. Residues 419 to 440 form a disordered region; the sequence is EEVEPANEPEPPAIPAGAGLHG.

Belongs to the dicarboxylate/amino acid:cation symporter (DAACS) (TC 2.A.23) family.

It localises to the cell inner membrane. Responsible for the transport of dicarboxylates such as succinate, fumarate, and malate from the periplasm across the membrane. In Anaeromyxobacter sp. (strain K), this protein is C4-dicarboxylate transport protein.